The primary structure comprises 367 residues: Protein U67 (367 aa).

The protein belongs to the herpesviridae UL95 family.

The protein is Protein U67 of Elephantid herpesvirus 1 (isolate Asian elephant/Berlin/Kiba/1998) (EIHV-1).